The primary structure comprises 399 residues: Elongation factor Tu (399 aa).

The tr-type G domain occupies 10-204; it reads KPHVNIGTIG…AVDASIPEPE (195 aa). The interval 19–26 is G1; sequence GHVDHGKT. 19-26 lines the GTP pocket; sequence GHVDHGKT. Thr26 contributes to the Mg(2+) binding site. The tract at residues 60 to 64 is G2; the sequence is GITIN. The interval 81–84 is G3; that stretch reads DCPG. GTP is bound by residues 81–85 and 136–139; these read DCPGH and NKCD. Positions 136-139 are G4; that stretch reads NKCD. The G5 stretch occupies residues 174-176; it reads SGL.

Belongs to the TRAFAC class translation factor GTPase superfamily. Classic translation factor GTPase family. EF-Tu/EF-1A subfamily. As to quaternary structure, monomer.

Its subcellular location is the cytoplasm. It catalyses the reaction GTP + H2O = GDP + phosphate + H(+). Functionally, GTP hydrolase that promotes the GTP-dependent binding of aminoacyl-tRNA to the A-site of ribosomes during protein biosynthesis. In Prochlorococcus marinus (strain MIT 9312), this protein is Elongation factor Tu.